Consider the following 542-residue polypeptide: Neutral amino acid transporter B(0) (542 aa).

Met1 is subject to N-acetylmethionine. At 1–52 (MVADPPRGDSKGLAAAEPTANGGLALASIEDQGEAAGGCCGSRDRVRRCLRA) the chain is on the cytoplasmic side. The helical transmembrane segment at 53 to 82 (NLLVLLTVVAVVVGVALGLGVSGAGGALAL) threads the bilayer. Residues 83–95 (GPERLSAFVFPGE) are Extracellular-facing. A helical transmembrane segment spans residues 96–117 (LLLRLLRMIILPLVVCSLIGGA). Residues 118 to 131 (ASLDPGALGRLGAW) are Cytoplasmic-facing. A helical membrane pass occupies residues 132–154 (ALLFFLVTTLLASALGVALALAL). The Extracellular portion of the chain corresponds to 155–225 (QPGAASAAIN…GTRVKVPVGQ (71 aa)). N-linked (GlcNAc...) asparagine glycans are attached at residues Asn164 and Asn213. A helical membrane pass occupies residues 226 to 249 (EVEGMNILGLVVFAIVFGVALRKL). The Cytoplasmic portion of the chain corresponds to 250–258 (GPEGELLIR). The chain crosses the membrane as a helical span at residues 259–286 (FFNSFNEATMVLVSWIMWYAPVGIMFLV). Residues 287 to 307 (AGKIVEMEDVGLLFARLGKYI) are Extracellular-facing. A helical membrane pass occupies residues 308-329 (LCCLLGHAIHGLLVLPLIYFLF). Residues 330–334 (TRKNP) lie on the Cytoplasmic side of the membrane. Positions 335-365 (YRFLWGIVTPLATAFGTSSSSATLPLMMKCV) form an intramembrane region, discontinuously helical. The Cytoplasmic segment spans residues 366–374 (EENNGVAKH). The chain crosses the membrane as a helical span at residues 375-401 (ISRFILPIGATVNMDGAALFQCVAAVF). The Na(+) site is built by Gly383, Thr385, and Asn387. At 402 to 414 (IAQLSEQSLDFVK) the chain is on the extracellular side. The discontinuously helical intramembrane region spans 415–448 (IITILVTATASSVGAAGIPAGGVLTLAIILEAVN). Residues 449-461 (LPVDHISLILAVD) are Extracellular-facing. A helical transmembrane segment spans residues 462–483 (WLVDRSCTVLNVEGDALGAGLL). Residues Asn472 and Asp476 each coordinate Na(+). Residues 484-542 (QNYVDRTEVRSTEPELIQVKSELPLDPLPAPTEEGNPLLRHYRGPAGDATVASEKESVM) are Cytoplasmic-facing. Ser494 carries the phosphoserine modification. Thr495 carries the phosphothreonine modification. A phosphoserine mark is found at Ser504, Ser536, and Ser540. A disordered region spans residues 509–542 (DPLPAPTEEGNPLLRHYRGPAGDATVASEKESVM).

This sequence belongs to the dicarboxylate/amino acid:cation symporter (DAACS) (TC 2.A.23) family. SLC1A5 subfamily. As to quaternary structure, homotrimer.

It is found in the cell membrane. The protein localises to the melanosome. The enzyme catalyses L-glutamine(out) + L-serine(in) + Na(+)(out) = L-glutamine(in) + L-serine(out) + Na(+)(in). The catalysed reaction is L-glutamine(in) + L-serine(out) + Na(+)(out) = L-glutamine(out) + L-serine(in) + Na(+)(in). It carries out the reaction L-threonine(in) + L-glutamine(out) + Na(+)(out) = L-threonine(out) + L-glutamine(in) + Na(+)(in). It catalyses the reaction L-threonine(out) + L-glutamine(in) + Na(+)(out) = L-threonine(in) + L-glutamine(out) + Na(+)(in). The enzyme catalyses L-asparagine(in) + L-glutamine(out) + Na(+)(out) = L-asparagine(out) + L-glutamine(in) + Na(+)(in). The catalysed reaction is L-asparagine(out) + L-glutamine(in) + Na(+)(out) = L-asparagine(in) + L-glutamine(out) + Na(+)(in). It carries out the reaction L-glutamine(in) + L-alanine(out) + Na(+)(out) = L-glutamine(out) + L-alanine(in) + Na(+)(in). It catalyses the reaction L-valine(out) + L-glutamine(in) + Na(+)(out) = L-valine(in) + L-glutamine(out) + Na(+)(in). The enzyme catalyses L-glutamine(in) + L-methionine(out) + Na(+)(out) = L-glutamine(out) + L-methionine(in) + Na(+)(in). The catalysed reaction is L-glutamine(in) + L-glutamate(out) + Na(+)(out) + H(+)(out) = L-glutamine(out) + L-glutamate(in) + Na(+)(in) + H(+)(in). It carries out the reaction D-serine(in) + L-glutamine(out) + Na(+)(out) = D-serine(out) + L-glutamine(in) + Na(+)(in). It catalyses the reaction D-serine(in) + L-alanine(out) + Na(+)(out) = D-serine(out) + L-alanine(in) + Na(+)(in). The enzyme catalyses nitrate(in) = nitrate(out). The catalysed reaction is iodide(out) = iodide(in). It carries out the reaction thiocyanate(in) = thiocyanate(out). Sodium-coupled antiporter of neutral amino acids. In a tri-substrate transport cycle, exchanges neutral amino acids between the extracellular and intracellular compartments, coupled to the inward cotransport of at least one sodium ion. The preferred substrate is the essential amino acid L-glutamine, a precursor for biosynthesis of proteins, nucleotides and amine sugars as well as an alternative fuel for mitochondrial oxidative phosphorylation. Exchanges L-glutamine with other neutral amino acids such as L-serine, L-threonine and L-asparagine in a bidirectional way. Provides L-glutamine to proliferating stem and activated cells driving the metabolic switch toward cell differentiation. The transport cycle is usually pH-independent, with the exception of L-glutamate. Transports extracellular L-glutamate coupled to the cotransport of one proton and one sodium ion in exchange for intracellular L-glutamine counter-ion. May provide for L-glutamate uptake in glial cells regulating glutamine/glutamate cycle in the nervous system. Can transport D-amino acids. Mediates D-serine release from the retinal glia potentially affecting NMDA receptor function in retinal neurons. Displays sodium- and amino acid-dependent but uncoupled channel-like anion conductance with a preference SCN(-) &gt;&gt; NO3(-) &gt; I(-) &gt; Cl(-). Through binding of the fusogenic protein syncytin-1/ERVW-1 may mediate trophoblasts syncytialization, the spontaneous fusion of their plasma membranes, an essential process in placental development. In Macaca fascicularis (Crab-eating macaque), this protein is Neutral amino acid transporter B(0) (SLC1A5).